A 613-amino-acid polypeptide reads, in one-letter code: tRNA (uracil-5-)-methyltransferase homolog A (613 aa).

A disordered region spans residues 1–46; sequence MSEPAAEVPEPMEDCGQDASAVPSSAAPLCQKEEAGPGPAAGPGTQ. Positions 63–136 constitute an RRM domain; sequence FKLELQNVPR…CPLSVRLARP (74 aa). The stretch at 170–200 forms a coiled coil; it reads YTEQLEQKRLECERVLQKLAKEIGNTNRALL. Position 368 is a phosphoserine (Ser-368). S-adenosyl-L-methionine-binding residues include Gln-401, Glu-451, and Asp-500. Cys-528 acts as the Nucleophile in catalysis. Glu-571 acts as the Proton acceptor in catalysis.

The protein belongs to the class I-like SAM-binding methyltransferase superfamily. RNA M5U methyltransferase family. As to expression, widely expressed at low level. Expressed at higher level in proliferating cells.

The protein localises to the cytoplasm. Its subcellular location is the cytosol. It carries out the reaction uridine(54) in tRNA + S-adenosyl-L-methionine = 5-methyluridine(54) in tRNA + S-adenosyl-L-homocysteine + H(+). The catalysed reaction is a uridine in mRNA + S-adenosyl-L-methionine = a 5-methyluridine in mRNA + S-adenosyl-L-homocysteine + H(+). Functionally, S-adenosyl-L-methionine-dependent methyltransferase that catalyzes the formation of 5-methyl-uridine in tRNAs and some mRNAs. Mainly catalyzes the methylation of uridine at position 54 (m5U54) in cytosolic tRNAs. Also able to mediate the formation of 5-methyl-uridine in some mRNAs. This chain is tRNA (uracil-5-)-methyltransferase homolog A, found in Mus musculus (Mouse).